The chain runs to 158 residues: S-ribosylhomocysteine lyase (158 aa).

Fe cation is bound by residues H54, H58, and C124.

Belongs to the LuxS family. As to quaternary structure, homodimer. Fe cation serves as cofactor.

The catalysed reaction is S-(5-deoxy-D-ribos-5-yl)-L-homocysteine = (S)-4,5-dihydroxypentane-2,3-dione + L-homocysteine. Functionally, involved in the synthesis of autoinducer 2 (AI-2) which is secreted by bacteria and is used to communicate both the cell density and the metabolic potential of the environment. The regulation of gene expression in response to changes in cell density is called quorum sensing. Catalyzes the transformation of S-ribosylhomocysteine (RHC) to homocysteine (HC) and 4,5-dihydroxy-2,3-pentadione (DPD). The chain is S-ribosylhomocysteine lyase from Limosilactobacillus reuteri (strain DSM 20016) (Lactobacillus reuteri).